The chain runs to 165 residues: Ribosome maturation factor RimM (165 aa).

Positions 90–161 (PDTYYVSDLK…KIIIKPVGEW (72 aa)) constitute a PRC barrel domain.

Belongs to the RimM family. Binds ribosomal protein uS19.

The protein resides in the cytoplasm. In terms of biological role, an accessory protein needed during the final step in the assembly of 30S ribosomal subunit, possibly for assembly of the head region. Essential for efficient processing of 16S rRNA. May be needed both before and after RbfA during the maturation of 16S rRNA. It has affinity for free ribosomal 30S subunits but not for 70S ribosomes. The sequence is that of Ribosome maturation factor RimM from Clostridium beijerinckii (strain ATCC 51743 / NCIMB 8052) (Clostridium acetobutylicum).